The following is a 652-amino-acid chain: O-fucosyltransferase 15 (652 aa).

Residues 91–111 form a helical; Signal-anchor for type II membrane protein membrane-spanning segment; sequence TAAFVIVLVGFFIFVNWFMLS. Asn-139, Asn-169, and Asn-251 each carry an N-linked (GlcNAc...) asparagine glycan. 426 to 428 serves as a coordination point for substrate; that stretch reads HLR. N-linked (GlcNAc...) asparagine glycans are attached at residues Asn-464, Asn-546, and Asn-607.

The protein belongs to the glycosyltransferase GT106 family.

The protein localises to the membrane. It functions in the pathway glycan metabolism. This chain is O-fucosyltransferase 15, found in Arabidopsis thaliana (Mouse-ear cress).